The chain runs to 319 residues: Bidirectional sugar transporter SWEET15 (319 aa).

The Extracellular segment spans residues 1–10 (MAFMSMERST). The helical transmembrane segment at 11–31 (WAFTFGILGNLISLMVFLSPL) threads the bilayer. Positions 13–99 (FTFGILGNLI…AMYLAYAPKS (87 aa)) constitute a MtN3/slv 1 domain. The Cytoplasmic segment spans residues 32 to 50 (PTFYRVYRKKSTEGFQSTP). A helical transmembrane segment spans residues 51–71 (YVVTLFSCMLWMYYAFVKSGA). A topological domain (extracellular) is located at residue glutamate 72. A helical transmembrane segment spans residues 73-93 (LLVTINGVGCVIETVYLAMYL). The Cytoplasmic portion of the chain corresponds to 94 to 106 (AYAPKSARMLTAK). Residues 107–127 (MLLGLNIGLFGVIALVTLLLS) traverse the membrane as a helical segment. Topologically, residues 128–134 (RGELRVH) are extracellular. The helical transmembrane segment at 135-155 (VLGWICVAVSLSVFAAPLSII) threads the bilayer. The MtN3/slv 2 domain occupies 135–219 (VLGWICVAVS…ALYMAYRSKK (85 aa)). At 156–167 (RLVIRTKSVEFM) the chain is on the cytoplasmic side. Residues 168 to 188 (PFSLSFFLVLSAVIWFLYGLL) form a helical membrane-spanning segment. The Extracellular portion of the chain corresponds to 189-191 (KKD). Residues 192 to 212 (VFVALPNVLGFVFGVAQMALY) form a helical membrane-spanning segment. Over 213 to 319 (MAYRSKKPLV…KPDMAIVVEV (107 aa)) the chain is Cytoplasmic.

Belongs to the SWEET sugar transporter family. In terms of assembly, forms homooligomers and/or heterooligomers.

The protein localises to the cell membrane. Functionally, mediates both low-affinity uptake and efflux of sugar across the plasma membrane. This chain is Bidirectional sugar transporter SWEET15 (SWEET15), found in Oryza sativa subsp. indica (Rice).